Reading from the N-terminus, the 274-residue chain is Acetylaranotin bis-thiomethyltransferase (274 aa).

Belongs to the class I-like SAM-binding methyltransferase superfamily.

It participates in mycotoxin biosynthesis. Acetylaranotin bis-thiomethyltransferase involved in the biosynthesis of acetylaranotin derivatives, members of the epipolythiodioxopiperazine (ETP) class of toxins characterized by a disulfide-bridged cyclic dipeptide. The first step of acetylaranotin biosynthesis is performed by the NRPS ataP which produces diketopiperazine cyclo-L-Phe-L-Phe via the condensation of 2 phenylalanines (L-Phe). The ataC domain of ataTC then catalyzes the formation of bishydroxylation of cyclo-L-Phe-L-Phe. The glutathione S-transferase domain ataG in ataIMG further catalyzes the conjugation of two glutathiones to the bishydroxylated intermediate. Next, the dipeptidase ataJ removes the Glu residues. The following step is performed by the carbon sulfur lyase domain ataI of ataIMG which may convert the bis-cysteinyl adduct to yield an epidithiol intermediate. The ataT domain from ataTC then catalyzes the oxidation of the free dithiols, followed by a cyclization step catalyzed by the cytochrome P450 ataF. AtaF probably acts as an epoxidase to promote a dual epoxidation formation at C8 and C9 along with C8' and C9', followed by the spontaneous nucleophilic attack of the amide nitrogens N10 and N10' to yield an intermediate with the pyrrolidine partial structure. The final steps of acetylaranotin biosynthesis involve the acetylation and ring rearrangement of an epitetrathiodiketopiperazine intermediate to produce acetylaranotin. AtaH probably catalyzes the acetylation of epitetrathiodiketopiperazine to produce a diacetate and ataY is responsible for the formation of the dihydrooxepin moiety that converts the diacetate intermediate to acetylaranotin via acetylapoaranotin. Both enzymes could function independently in the absence of the other. The acetylaranotin bis-thiomethyltransferase ataS located outside of acetylaranotin gene cluster is the main thiomethyltransferase responsible for converting acetylaranotin and its related intermediates to their methylated forms. This Aspergillus terreus (strain NIH 2624 / FGSC A1156) protein is Acetylaranotin bis-thiomethyltransferase.